A 111-amino-acid chain; its full sequence is Nucleoid-associated protein Teth39_2199 (111 aa).

This sequence belongs to the YbaB/EbfC family. In terms of assembly, homodimer.

The protein resides in the cytoplasm. Its subcellular location is the nucleoid. Functionally, binds to DNA and alters its conformation. May be involved in regulation of gene expression, nucleoid organization and DNA protection. This Thermoanaerobacter pseudethanolicus (strain ATCC 33223 / 39E) (Clostridium thermohydrosulfuricum) protein is Nucleoid-associated protein Teth39_2199.